A 98-amino-acid chain; its full sequence is Small ribosomal subunit protein uS19 (98 aa).

Residues 77 to 98 form a disordered region; the sequence is TRTYRGHAGGKAEKGGAAPKRK.

Belongs to the universal ribosomal protein uS19 family.

Protein S19 forms a complex with S13 that binds strongly to the 16S ribosomal RNA. The protein is Small ribosomal subunit protein uS19 of Chlorobium phaeovibrioides (strain DSM 265 / 1930) (Prosthecochloris vibrioformis (strain DSM 265)).